The sequence spans 402 residues: Imidazolonepropionase (402 aa).

Positions 66 and 68 each coordinate Fe(3+). Zn(2+) is bound by residues His-66 and His-68. Residues Arg-75, Tyr-138, and His-171 each coordinate 4-imidazolone-5-propanoate. Tyr-138 contributes to the N-formimidoyl-L-glutamate binding site. Position 236 (His-236) interacts with Fe(3+). A Zn(2+)-binding site is contributed by His-236. Gln-239 provides a ligand contact to 4-imidazolone-5-propanoate. Asp-311 is a binding site for Fe(3+). A Zn(2+)-binding site is contributed by Asp-311. Residues Asn-313 and Gly-315 each contribute to the N-formimidoyl-L-glutamate site. Thr-316 contacts 4-imidazolone-5-propanoate.

The protein belongs to the metallo-dependent hydrolases superfamily. HutI family. Requires Zn(2+) as cofactor. Fe(3+) serves as cofactor.

It is found in the cytoplasm. It catalyses the reaction 4-imidazolone-5-propanoate + H2O = N-formimidoyl-L-glutamate. The protein operates within amino-acid degradation; L-histidine degradation into L-glutamate; N-formimidoyl-L-glutamate from L-histidine: step 3/3. Catalyzes the hydrolytic cleavage of the carbon-nitrogen bond in imidazolone-5-propanoate to yield N-formimidoyl-L-glutamate. It is the third step in the universal histidine degradation pathway. The sequence is that of Imidazolonepropionase from Pseudomonas aeruginosa (strain UCBPP-PA14).